Consider the following 274-residue polypeptide: Sulfur carrier protein FdhD (274 aa).

Catalysis depends on Cys121, which acts as the Cysteine persulfide intermediate. 258 to 263 is a Mo-bis(molybdopterin guanine dinucleotide) binding site; sequence FSKPGR.

It belongs to the FdhD family.

It is found in the cytoplasm. Functionally, required for formate dehydrogenase (FDH) activity. Acts as a sulfur carrier protein that transfers sulfur from IscS to the molybdenum cofactor prior to its insertion into FDH. This Yersinia pseudotuberculosis serotype IB (strain PB1/+) protein is Sulfur carrier protein FdhD.